The chain runs to 198 residues: Large ribosomal subunit protein bL25 (198 aa).

It belongs to the bacterial ribosomal protein bL25 family. CTC subfamily. As to quaternary structure, part of the 50S ribosomal subunit; part of the 5S rRNA/L5/L18/L25 subcomplex. Contacts the 5S rRNA. Binds to the 5S rRNA independently of L5 and L18.

This is one of the proteins that binds to the 5S RNA in the ribosome where it forms part of the central protuberance. This Chlorobium phaeobacteroides (strain DSM 266 / SMG 266 / 2430) protein is Large ribosomal subunit protein bL25.